The following is a 583-amino-acid chain: Probable cysteine--tRNA ligase, mitochondrial (583 aa).

Residue Cys82 coordinates Zn(2+). L-cysteine is bound at residue Gly83. Residues 84 to 94 (PTVYSSSHIGH) carry the 'HIGH' region motif. Thr123 lines the L-cysteine pocket. The 'KIIK' region motif lies at 128–131 (KIIN). Positions 271, 296, and 300 each coordinate Zn(2+). An L-cysteine-binding site is contributed by His296. The short motif at 337 to 341 (KMSKS) is the 'KMSKS' region element. Lys340 lines the ATP pocket.

It belongs to the class-I aminoacyl-tRNA synthetase family. It depends on Zn(2+) as a cofactor.

It localises to the mitochondrion. It carries out the reaction tRNA(Cys) + L-cysteine + ATP = L-cysteinyl-tRNA(Cys) + AMP + diphosphate. In terms of biological role, mitochondrial cysteine-specific aminoacyl-tRNA synthetase that catalyzes the ATP-dependent ligation of cysteine to tRNA(Cys). Its function is as follows. In addition to its role as an aminoacyl-tRNA synthetase, has also cysteine persulfide synthase activity. Produces reactive persulfide species such as cysteine persulfide (CysSSH) from substrate cysteine and mediate direct incorporation of CysSSH into proteins during translations, resulting in protein persulfides and polysulfides. CysSSHs behave as potent antioxidants and cellular protectants. The polypeptide is Probable cysteine--tRNA ligase, mitochondrial (mcysS) (Dictyostelium discoideum (Social amoeba)).